Consider the following 166-residue polypeptide: Photosystem I assembly protein Ycf3 (166 aa).

TPR repeat units follow at residues 31 to 64, 68 to 101, and 116 to 149; these read AFKY…EEDP, SYIL…NPNL, and GEQA…APNN.

Belongs to the Ycf3 family.

The protein resides in the cellular thylakoid membrane. Functionally, essential for the assembly of the photosystem I (PSI) complex. May act as a chaperone-like factor to guide the assembly of the PSI subunits. This is Photosystem I assembly protein Ycf3 from Acaryochloris marina (strain MBIC 11017).